A 492-amino-acid chain; its full sequence is Cytochrome P450 2B12 (492 aa).

A Phosphoserine modification is found at Ser-129. Cys-437 is a heme binding site.

This sequence belongs to the cytochrome P450 family. The cofactor is heme. As to expression, preputial gland, but not in liver.

Its subcellular location is the endoplasmic reticulum membrane. It localises to the microsome membrane. It carries out the reaction an organic molecule + reduced [NADPH--hemoprotein reductase] + O2 = an alcohol + oxidized [NADPH--hemoprotein reductase] + H2O + H(+). Functionally, cytochromes P450 are a group of heme-thiolate monooxygenases. In liver microsomes, this enzyme is involved in an NADPH-dependent electron transport pathway. This isozyme seems responsible for metabolism of 2,2',4,4',5,5'-hexachlorobiphenyl. The protein is Cytochrome P450 2B12 (Cyp2b12) of Rattus norvegicus (Rat).